A 64-amino-acid polypeptide reads, in one-letter code: Large ribosomal subunit protein uL29 (64 aa).

This sequence belongs to the universal ribosomal protein uL29 family.

The polypeptide is Large ribosomal subunit protein uL29 (Pseudomonas entomophila (strain L48)).